The following is a 252-amino-acid chain: Imidazole glycerol phosphate synthase subunit HisF (252 aa).

Catalysis depends on residues Asp11 and Asp130.

It belongs to the HisA/HisF family. As to quaternary structure, heterodimer of HisH and HisF.

Its subcellular location is the cytoplasm. The catalysed reaction is 5-[(5-phospho-1-deoxy-D-ribulos-1-ylimino)methylamino]-1-(5-phospho-beta-D-ribosyl)imidazole-4-carboxamide + L-glutamine = D-erythro-1-(imidazol-4-yl)glycerol 3-phosphate + 5-amino-1-(5-phospho-beta-D-ribosyl)imidazole-4-carboxamide + L-glutamate + H(+). The protein operates within amino-acid biosynthesis; L-histidine biosynthesis; L-histidine from 5-phospho-alpha-D-ribose 1-diphosphate: step 5/9. Its function is as follows. IGPS catalyzes the conversion of PRFAR and glutamine to IGP, AICAR and glutamate. The HisF subunit catalyzes the cyclization activity that produces IGP and AICAR from PRFAR using the ammonia provided by the HisH subunit. The protein is Imidazole glycerol phosphate synthase subunit HisF of Staphylococcus epidermidis (strain ATCC 12228 / FDA PCI 1200).